Reading from the N-terminus, the 314-residue chain is MSLLDWFAERRKQTSLNLTGSSPFDKERQVREIADGLWQKCPACDALTYTKDLQQNWQVCPSCGYHHRITAPQRLQQLLDPGSWQPLDEHLAPTDPLHFFDQKPYAERLASYQERTQLKDAVLTGLGSLEGIPVAMGVMDFRFMGGSMGSVVGEKITRLTERATRDHLPLVIFSASGGARMQEGILSLMQMAKTAAALQRHREAGQLFISVLTHPTYGGVTASFAMLGDLILAEPGAQVGFAGPNVIEQTIGKGKLPEGFQTAEYLLAHGLIDAIVPRTELRRRLAQLLAMHRPRLRMSLPALEPTYALDPARI.

In terms of domain architecture, CoA carboxyltransferase N-terminal spans 37 to 307 (LWQKCPACDA…MSLPALEPTY (271 aa)). Residues Cys41, Cys44, Cys60, and Cys63 each coordinate Zn(2+). The C4-type zinc-finger motif lies at 41–63 (CPACDALTYTKDLQQNWQVCPSC).

It belongs to the AccD/PCCB family. Acetyl-CoA carboxylase is a heterohexamer composed of biotin carboxyl carrier protein (AccB), biotin carboxylase (AccC) and two subunits each of ACCase subunit alpha (AccA) and ACCase subunit beta (AccD). Zn(2+) serves as cofactor.

Its subcellular location is the cytoplasm. It carries out the reaction N(6)-carboxybiotinyl-L-lysyl-[protein] + acetyl-CoA = N(6)-biotinyl-L-lysyl-[protein] + malonyl-CoA. Its pathway is lipid metabolism; malonyl-CoA biosynthesis; malonyl-CoA from acetyl-CoA: step 1/1. Functionally, component of the acetyl coenzyme A carboxylase (ACC) complex. Biotin carboxylase (BC) catalyzes the carboxylation of biotin on its carrier protein (BCCP) and then the CO(2) group is transferred by the transcarboxylase to acetyl-CoA to form malonyl-CoA. This is Acetyl-coenzyme A carboxylase carboxyl transferase subunit beta from Synechococcus sp. (strain JA-3-3Ab) (Cyanobacteria bacterium Yellowstone A-Prime).